Reading from the N-terminus, the 349-residue chain is D-alanine--D-alanine ligase (349 aa).

The ATP-grasp domain occupies 132–335 (KHVFEAVGVP…YSDLIEKLVD (204 aa)). 162–217 (VEKLDFPVFVKPANMGSSVGISKVDDLADLQPALSEAYKYDNRVVIEQGVDAREIE) serves as a coordination point for ATP. Residues D289, E302, and N304 each coordinate Mg(2+).

Belongs to the D-alanine--D-alanine ligase family. Mg(2+) is required as a cofactor. Requires Mn(2+) as cofactor.

The protein localises to the cytoplasm. It catalyses the reaction 2 D-alanine + ATP = D-alanyl-D-alanine + ADP + phosphate + H(+). It participates in cell wall biogenesis; peptidoglycan biosynthesis. Cell wall formation. This Lactococcus lactis subsp. cremoris (strain MG1363) protein is D-alanine--D-alanine ligase.